Reading from the N-terminus, the 207-residue chain is MAKLDVYNTSHKKVGEIELSDAVFNDEVREYLIHEAVKIQLANRRAGTVAVKNRAAVSGSGKKPFKQKGTGQARQGCKRAPQYPGGGVAFGPQPKTYNLSMNKKARRAALRSALSLLFKNDKLTVLDAINLDTVSTKNFVGVLKGFSLDKALVVTDAENRNLELSARNIKNVKVLKTEGLNIFDLMKYQRVIFTENSVRKVEGALQS.

Positions 59 to 78 are disordered; it reads GSGKKPFKQKGTGQARQGCK.

This sequence belongs to the universal ribosomal protein uL4 family. Part of the 50S ribosomal subunit.

In terms of biological role, one of the primary rRNA binding proteins, this protein initially binds near the 5'-end of the 23S rRNA. It is important during the early stages of 50S assembly. It makes multiple contacts with different domains of the 23S rRNA in the assembled 50S subunit and ribosome. Its function is as follows. Forms part of the polypeptide exit tunnel. In Geotalea daltonii (strain DSM 22248 / JCM 15807 / FRC-32) (Geobacter daltonii), this protein is Large ribosomal subunit protein uL4.